The sequence spans 93 residues: Small ribosomal subunit protein uS19 (93 aa).

The disordered stretch occupies residues 73-93 (EFSPTRTFRGHVKDDRKSKRR). Basic and acidic residues predominate over residues 83–93 (HVKDDRKSKRR).

The protein belongs to the universal ribosomal protein uS19 family.

In terms of biological role, protein S19 forms a complex with S13 that binds strongly to the 16S ribosomal RNA. The chain is Small ribosomal subunit protein uS19 from Streptomyces coelicolor (strain ATCC BAA-471 / A3(2) / M145).